Here is a 309-residue protein sequence, read N- to C-terminus: NADH-quinone oxidoreductase subunit C (309 aa).

Positions 198-309 (LPGDEKAVPP…RTRKKKEDGE (112 aa)) are disordered. Positions 220–230 (TKGDAKADVPK) are enriched in basic and acidic residues. The segment covering 246–261 (DAAAKPVAEAAAPAAT) has biased composition (low complexity).

This sequence belongs to the complex I 30 kDa subunit family. As to quaternary structure, NDH-1 is composed of 14 different subunits. Subunits NuoB, C, D, E, F, and G constitute the peripheral sector of the complex.

It localises to the cell inner membrane. The enzyme catalyses a quinone + NADH + 5 H(+)(in) = a quinol + NAD(+) + 4 H(+)(out). Functionally, NDH-1 shuttles electrons from NADH, via FMN and iron-sulfur (Fe-S) centers, to quinones in the respiratory chain. The immediate electron acceptor for the enzyme in this species is believed to be ubiquinone. Couples the redox reaction to proton translocation (for every two electrons transferred, four hydrogen ions are translocated across the cytoplasmic membrane), and thus conserves the redox energy in a proton gradient. This Novosphingobium aromaticivorans (strain ATCC 700278 / DSM 12444 / CCUG 56034 / CIP 105152 / NBRC 16084 / F199) protein is NADH-quinone oxidoreductase subunit C.